The primary structure comprises 127 residues: MIKATKLKKKYDKLKIAKWSFLGILIILFILSNHYYIKHSNIFQNILLTSLTILSTGLIFLTKSGKKFLIFTKSAIHETKLITWPNFKDTLHVTFTVIIVTILLALILWGLDNILIWFISLITSLRL.

The next 3 membrane-spanning stretches (helical) occupy residues 16–36 (IAKW…NHYY), 42–62 (IFQN…IFLT), and 98–118 (IIVT…LIWF).

It belongs to the SecE/SEC61-gamma family. In terms of assembly, component of the Sec protein translocase complex. Heterotrimer consisting of SecY, SecE and SecG subunits. The heterotrimers can form oligomers, although 1 heterotrimer is thought to be able to translocate proteins. Interacts with the ribosome. Interacts with SecDF, and other proteins may be involved. Interacts with SecA.

It localises to the cell membrane. Its function is as follows. Essential subunit of the Sec protein translocation channel SecYEG. Clamps together the 2 halves of SecY. May contact the channel plug during translocation. The chain is Protein translocase subunit SecE from Buchnera aphidicola subsp. Baizongia pistaciae (strain Bp).